Reading from the N-terminus, the 68-residue chain is ATP synthase F(0) complex subunit 8 (68 aa).

A helical membrane pass occupies residues 8 to 24; the sequence is TWLITILSMILTLLIVF. Residue Lys54 is modified to N6-acetyllysine; alternate. An N6-succinyllysine; alternate modification is found at Lys54. Lys57 is subject to N6-acetyllysine.

It belongs to the ATPase protein 8 family. As to quaternary structure, component of the ATP synthase complex composed at least of ATP5F1A/subunit alpha, ATP5F1B/subunit beta, ATP5MC1/subunit c (homooctomer), MT-ATP6/subunit a, MT-ATP8/subunit 8, ATP5ME/subunit e, ATP5MF/subunit f, ATP5MG/subunit g, ATP5MK/subunit k, ATP5MJ/subunit j, ATP5F1C/subunit gamma, ATP5F1D/subunit delta, ATP5F1E/subunit epsilon, ATP5PF/subunit F6, ATP5PB/subunit b, ATP5PD/subunit d, ATP5PO/subunit OSCP. ATP synthase complex consists of a soluble F(1) head domain (subunits alpha(3) and beta(3)) - the catalytic core - and a membrane F(0) domain - the membrane proton channel (subunits c, a, 8, e, f, g, k and j). These two domains are linked by a central stalk (subunits gamma, delta, and epsilon) rotating inside the F1 region and a stationary peripheral stalk (subunits F6, b, d, and OSCP). Interacts with PRICKLE3.

It is found in the mitochondrion membrane. In terms of biological role, subunit 8, of the mitochondrial membrane ATP synthase complex (F(1)F(0) ATP synthase or Complex V) that produces ATP from ADP in the presence of a proton gradient across the membrane which is generated by electron transport complexes of the respiratory chain. ATP synthase complex consist of a soluble F(1) head domain - the catalytic core - and a membrane F(1) domain - the membrane proton channel. These two domains are linked by a central stalk rotating inside the F(1) region and a stationary peripheral stalk. During catalysis, ATP synthesis in the catalytic domain of F(1) is coupled via a rotary mechanism of the central stalk subunits to proton translocation. In vivo, can only synthesize ATP although its ATP hydrolase activity can be activated artificially in vitro. Part of the complex F(0) domain. The polypeptide is ATP synthase F(0) complex subunit 8 (Lemur catta (Ring-tailed lemur)).